A 327-amino-acid chain; its full sequence is uncharacterized protein (327 aa).

A signal peptide spans 1–23 (MGGGRLPPLWLPLLIAWSEWGNC). Residues Asn144 and Asn239 are each glycosylated (N-linked (GlcNAc...) asparagine; by host). Positions 298–327 (EESEAAEETAAGEASAVAAAAVSEEEQRRE) are disordered. The span at 305 to 319 (ETAAGEASAVAAAAV) shows a compositional bias: low complexity.

This is an uncharacterized protein from Human cytomegalovirus (strain AD169) (HHV-5).